The chain runs to 564 residues: Poly(U)-binding-splicing factor PUF60 (564 aa).

The tract at residues Met1–Phe521 is inhibits homodimerization. The segment at Lys37–Leu61 is disordered. Lys48 participates in a covalent cross-link: Glycyl lysine isopeptide (Lys-Gly) (interchain with G-Cter in SUMO2). Thr65 carries the post-translational modification Phosphothreonine. An inhibits transcriptional repression, interaction with ERCC3 and apoptosis induction region spans residues Gln82 to Ala564. A Glycyl lysine isopeptide (Lys-Gly) (interchain with G-Cter in SUMO2) cross-link involves residue Lys85. The residue at position 117 (Ser117) is a Phosphoserine. 2 RRM domains span residues Cys134–Asn212 and Asn231–Thr309. Position 249 is a phosphoserine (Ser249). Lys256 is subject to N6-acetyllysine. Position 319 is a phosphothreonine (Thr319). The interval Lys421 to Gln442 is disordered. A Glycyl lysine isopeptide (Lys-Gly) (interchain with G-Cter in SUMO2) cross-link involves residue Lys424. Residues Glu432–Gln442 are compositionally biased toward basic and acidic residues. Lys459 is modified (N6-acetyllysine). Lys463 is covalently cross-linked (Glycyl lysine isopeptide (Lys-Gly) (interchain with G-Cter in SUMO2)). Residues Thr467 to Gln554 form the RRM 3; atypical domain.

It belongs to the RRM half pint family. As to quaternary structure, homodimer. Associates with the spliceosome. Found in a complex with RO60 and Y5 RNA. Found in a complex with FUBP1 and far upstream element (FUSE) DNA segment. Interacts directly with ERCC3. Interacts with CDK7 and GTF2H1. Interacts with SRSF11/P54. Interacts with ARGLU1; interaction may be involved in ARGLU1-mediated modulation of alternative splicing.

It localises to the nucleus. Functionally, DNA- and RNA-binding protein, involved in several nuclear processes such as pre-mRNA splicing, apoptosis and transcription regulation. In association with FUBP1 regulates MYC transcription at the P2 promoter through the core-TFIIH basal transcription factor. Acts as a transcriptional repressor through the core-TFIIH basal transcription factor. Represses FUBP1-induced transcriptional activation but not basal transcription. Decreases ERCC3 helicase activity. Is also involved in pre-mRNA splicing. Promotes splicing of an intron with weak 3'-splice site and pyrimidine tract in a cooperative manner with U2AF2. Involved in apoptosis induction when overexpressed in HeLa cells. Modulates alternative splicing of several mRNAs. Binds to relaxed DNA of active promoter regions. Binds to the pyrimidine tract and 3'-splice site regions of pre-mRNA; binding is enhanced in presence of U2AF2. Binds to Y5 RNA in association with RO60. Binds to poly(U) RNA. The chain is Poly(U)-binding-splicing factor PUF60 from Rattus norvegicus (Rat).